The chain runs to 418 residues: PP2A regulatory subunit TAP46 (418 aa).

The interval 367-418 (KMIQESNSAWHKDGSRSAQEDEDAEEEKARAWDDWKDDNPRGAGNKKLTPCG) is disordered. 2 stretches are compositionally biased toward basic and acidic residues: residues 376–385 (WHKDGSRSAQ) and 393–406 (EKAR…DDNP).

The protein belongs to the IGBP1/TAP42 family.

In terms of biological role, involved in the regulation of the TOR signaling pathway. Seems to act as a regulator of PP2A catalytic activity. The sequence is that of PP2A regulatory subunit TAP46 from Oryza sativa subsp. japonica (Rice).